Consider the following 210-residue polypeptide: uncharacterized protein (210 aa).

The 177-residue stretch at 4 to 180 (RKVYLYVFHT…AVEVLKKLDV (177 aa)) folds into the PfpI endopeptidase domain. Residue Cys-110 is the Nucleophile of the active site.

It belongs to the peptidase C56 family.

This is an uncharacterized protein from Bacillus subtilis (strain 168).